The chain runs to 181 residues: Adenylate kinase (181 aa).

An ATP-binding site is contributed by 10–15 (GAGKGT). An NMP region spans residues 30–59 (STGDLFRYNISNGTELGLEAKKYLDAGDLV). AMP-binding positions include T31, R36, 57–59 (DLV), 85–88 (GYPR), and Q92. Residues 126–132 (GRGRDDD) form an LID region. R127 contacts ATP. R129 and R140 together coordinate AMP. Residue G166 coordinates ATP.

Belongs to the adenylate kinase family. Monomer.

Its subcellular location is the cytoplasm. The enzyme catalyses AMP + ATP = 2 ADP. It participates in purine metabolism; AMP biosynthesis via salvage pathway; AMP from ADP: step 1/1. Its function is as follows. Catalyzes the reversible transfer of the terminal phosphate group between ATP and AMP. Plays an important role in cellular energy homeostasis and in adenine nucleotide metabolism. This is Adenylate kinase from Mycolicibacterium vanbaalenii (strain DSM 7251 / JCM 13017 / BCRC 16820 / KCTC 9966 / NRRL B-24157 / PYR-1) (Mycobacterium vanbaalenii).